We begin with the raw amino-acid sequence, 129 residues long: Venom CUB domain-containing protein 1 (129 aa).

Residues 1 to 18 (MKLLGVLITIYCIASTLA) form the signal peptide. Residues 19-121 (IDVNVPSNGM…KASCKAYSIT (103 aa)) form the CUB domain. Cysteine 66 and cysteine 83 are oxidised to a cystine.

The protein belongs to the venom CUB family. Contains 2 disulfide bonds. In terms of tissue distribution, expressed by the venom gland.

It is found in the secreted. In Platymeris rhadamanthus (Red spot assassin bug), this protein is Venom CUB domain-containing protein 1.